A 126-amino-acid polypeptide reads, in one-letter code: Protein mmf2, mitochondrial (126 aa).

It belongs to the RutC family.

Its subcellular location is the mitochondrion. The protein resides in the cytoplasm. Its function is as follows. Plays a role in the maintenance of mitochondrial DNA. The polypeptide is Protein mmf2, mitochondrial (mmf2) (Schizosaccharomyces pombe (strain 972 / ATCC 24843) (Fission yeast)).